Reading from the N-terminus, the 412-residue chain is Light-independent protochlorophyllide reductase subunit N (412 aa).

Residues cysteine 17, cysteine 42, and cysteine 103 each contribute to the [4Fe-4S] cluster site.

It belongs to the BchN/ChlN family. In terms of assembly, protochlorophyllide reductase is composed of three subunits; ChlL, ChlN and ChlB. Forms a heterotetramer of two ChlB and two ChlN subunits. [4Fe-4S] cluster is required as a cofactor.

It catalyses the reaction chlorophyllide a + oxidized 2[4Fe-4S]-[ferredoxin] + 2 ADP + 2 phosphate = protochlorophyllide a + reduced 2[4Fe-4S]-[ferredoxin] + 2 ATP + 2 H2O. Its pathway is porphyrin-containing compound metabolism; chlorophyll biosynthesis (light-independent). Its function is as follows. Component of the dark-operative protochlorophyllide reductase (DPOR) that uses Mg-ATP and reduced ferredoxin to reduce ring D of protochlorophyllide (Pchlide) to form chlorophyllide a (Chlide). This reaction is light-independent. The NB-protein (ChlN-ChlB) is the catalytic component of the complex. The chain is Light-independent protochlorophyllide reductase subunit N from Synechococcus sp. (strain CC9902).